A 500-amino-acid polypeptide reads, in one-letter code: Anthranilate synthase component 1 (500 aa).

Residues Ser49 and 276 to 278 (PFM) contribute to the L-tryptophan site. 311 to 312 (GT) is a binding site for chorismate. Glu338 serves as a coordination point for Mg(2+). Residues Tyr426, Arg446, 460-462 (GGG), and Gly462 contribute to the chorismate site. Residue Glu475 participates in Mg(2+) binding.

Belongs to the anthranilate synthase component I family. Heterotetramer consisting of two non-identical subunits: a beta subunit (TrpG) and a large alpha subunit (TrpE). The cofactor is Mg(2+).

It carries out the reaction chorismate + L-glutamine = anthranilate + pyruvate + L-glutamate + H(+). The protein operates within amino-acid biosynthesis; L-tryptophan biosynthesis; L-tryptophan from chorismate: step 1/5. Its activity is regulated as follows. Feedback inhibited by tryptophan. In terms of biological role, part of a heterotetrameric complex that catalyzes the two-step biosynthesis of anthranilate, an intermediate in the biosynthesis of L-tryptophan. In the first step, the glutamine-binding beta subunit (TrpG) of anthranilate synthase (AS) provides the glutamine amidotransferase activity which generates ammonia as a substrate that, along with chorismate, is used in the second step, catalyzed by the large alpha subunit of AS (TrpE) to produce anthranilate. In the absence of TrpG, TrpE can synthesize anthranilate directly from chorismate and high concentrations of ammonia. In Cereibacter sphaeroides (strain ATCC 17023 / DSM 158 / JCM 6121 / CCUG 31486 / LMG 2827 / NBRC 12203 / NCIMB 8253 / ATH 2.4.1.) (Rhodobacter sphaeroides), this protein is Anthranilate synthase component 1 (trpE).